A 287-amino-acid polypeptide reads, in one-letter code: Aquaporin PIP1-2 (287 aa).

The interval 1–37 (MEGKEEDVRLGANKFTERQPIGTAAQSQDKDYKEPPP) is disordered. Over 1 to 55 (MEGKEEDVRLGANKFTERQPIGTAAQSQDKDYKEPPPAPLFEPGELSSWSFYRAG) the chain is Cytoplasmic. Residues 56 to 76 (IAEFVATFLFLYITILTVMGV) traverse the membrane as a helical segment. Residues 77 to 89 (VKSSTKCSTVGIQ) lie on the Extracellular side of the membrane. The chain crosses the membrane as a helical span at residues 90-110 (GIAWAFGGMIFALVYCTAGIS). The Cytoplasmic portion of the chain corresponds to 111-133 (GGHINPAVTFGLFLARKLSLTRA). The NPA 1 signature appears at 115 to 117 (NPA). A helical transmembrane segment spans residues 134–154 (LFYMVMQCLGAICGAGVVKGF). The Extracellular segment spans residues 155–175 (QKGLYENNGGGANVVAPGYTK). A helical membrane pass occupies residues 176-196 (GDGLGAEIVGTFILVYTVFSA). Over 197–209 (TDAKRSARDSHVP) the chain is Cytoplasmic. The chain crosses the membrane as a helical span at residues 210–230 (ILAPLPIGFAVFLVHLATIPI). The Extracellular portion of the chain corresponds to 231 to 257 (TGTGINPARSLGAAIIYNKGHAWDDHW). An NPA 2 motif is present at residues 236–238 (NPA). A helical transmembrane segment spans residues 258-278 (IFWVGPFIGAALAALYHQVVI). At 279–287 (RAIPFKSRS) the chain is on the cytoplasmic side.

It belongs to the MIP/aquaporin (TC 1.A.8) family. PIP (TC 1.A.8.11) subfamily. As to expression, barely detectable in roots, leaves and fruits.

It is found in the cell membrane. In terms of biological role, water channel required to facilitate the transport of water across cell membrane; mercury-insensitive. Contributes to the tolerance to multiple abiotic stresses including salt (NaCl), cold and water deprivation, by modulating cytosolic K(+)/Na(+) ratio, maintaining osmotic balance, and reducing membrane injury (e.g. oxidative injury). The sequence is that of Aquaporin PIP1-2 from Musa acuminata subsp. malaccensis (Wild banana).